We begin with the raw amino-acid sequence, 197 residues long: uncharacterized protein (197 aa).

The 152-residue stretch at 33–184 (MISKIMDASS…IAEFMSILGK (152 aa)) folds into the SIS domain.

This sequence belongs to the SIS family. PHI subfamily.

This is an uncharacterized protein from Methanothermobacter thermautotrophicus (strain ATCC 29096 / DSM 1053 / JCM 10044 / NBRC 100330 / Delta H) (Methanobacterium thermoautotrophicum).